A 121-amino-acid chain; its full sequence is Large ribosomal subunit protein eL18 (121 aa).

It belongs to the eukaryotic ribosomal protein eL18 family.

This chain is Large ribosomal subunit protein eL18, found in Methanoregula boonei (strain DSM 21154 / JCM 14090 / 6A8).